The chain runs to 1206 residues: DNA-directed RNA polymerase subunit beta' (1206 aa).

Zn(2+) contacts are provided by Cys60, Cys62, Cys75, and Cys78. Residues Asp449, Asp451, and Asp453 each coordinate Mg(2+). Zn(2+) contacts are provided by Cys822, Cys896, Cys903, and Cys906.

Belongs to the RNA polymerase beta' chain family. The RNAP catalytic core consists of 2 alpha, 1 beta, 1 beta' and 1 omega subunit. When a sigma factor is associated with the core the holoenzyme is formed, which can initiate transcription. Mg(2+) is required as a cofactor. Zn(2+) serves as cofactor.

The catalysed reaction is RNA(n) + a ribonucleoside 5'-triphosphate = RNA(n+1) + diphosphate. DNA-dependent RNA polymerase catalyzes the transcription of DNA into RNA using the four ribonucleoside triphosphates as substrates. In Staphylococcus haemolyticus (strain JCSC1435), this protein is DNA-directed RNA polymerase subunit beta'.